Here is a 124-residue protein sequence, read N- to C-terminus: MAITKDDILEAVGAMSVMELNDLVKAFEEKFGVSAAAVAVAGPAAAGGAAAAEEQTEFTVTLKSAGANKVGVIKAVREITGLGLKEAKDLVDGAPKPVKEGVDKKTADELVKKLVEAGAEAEAK.

Belongs to the bacterial ribosomal protein bL12 family. As to quaternary structure, homodimer. Part of the ribosomal stalk of the 50S ribosomal subunit. Forms a multimeric L10(L12)X complex, where L10 forms an elongated spine to which 2 to 4 L12 dimers bind in a sequential fashion. Binds GTP-bound translation factors.

In terms of biological role, forms part of the ribosomal stalk which helps the ribosome interact with GTP-bound translation factors. Is thus essential for accurate translation. The polypeptide is Large ribosomal subunit protein bL12 (Ralstonia pickettii (strain 12J)).